The chain runs to 356 residues: Tyrosine recombinase XerS (356 aa).

The 106-residue stretch at Leu-16–Thr-121 folds into the Core-binding (CB) domain. Residues Lys-169–Asp-354 form the Tyr recombinase domain. Residues Arg-210, Lys-234, His-306, Arg-309, and His-332 contribute to the active site. Tyr-341 acts as the O-(3'-phospho-DNA)-tyrosine intermediate in catalysis.

Belongs to the 'phage' integrase family. XerS subfamily.

The protein resides in the cytoplasm. With respect to regulation, ftsK is required for recombination. Its function is as follows. Site-specific tyrosine recombinase, which acts by catalyzing the cutting and rejoining of the recombining DNA molecules. Essential to convert dimers of the bacterial chromosome into monomers to permit their segregation at cell division. This chain is Tyrosine recombinase XerS, found in Streptococcus thermophilus (strain ATCC BAA-250 / LMG 18311).